The following is a 90-amino-acid chain: Small ribosomal subunit protein uS15 (90 aa).

This sequence belongs to the universal ribosomal protein uS15 family. In terms of assembly, part of the 30S ribosomal subunit. Forms a bridge to the 50S subunit in the 70S ribosome, contacting the 23S rRNA.

Its function is as follows. One of the primary rRNA binding proteins, it binds directly to 16S rRNA where it helps nucleate assembly of the platform of the 30S subunit by binding and bridging several RNA helices of the 16S rRNA. In terms of biological role, forms an intersubunit bridge (bridge B4) with the 23S rRNA of the 50S subunit in the ribosome. This is Small ribosomal subunit protein uS15 from Campylobacter hominis (strain ATCC BAA-381 / DSM 21671 / CCUG 45161 / LMG 19568 / NCTC 13146 / CH001A).